A 521-amino-acid polypeptide reads, in one-letter code: Vang-like protein 2-A (521 aa).

Residues 1–81 (MDNDSQYSGY…TTVVTGTSEH (81 aa)) form a disordered region. The Cytoplasmic segment spans residues 1–108 (MDNDSQYSGY…AKLDCSRHLG (108 aa)). Residues 15-33 (GHSRSSRKHRDRRERHRSK) show a composition bias toward basic residues. Positions 57–67 (ESTRGEDRDDN) are enriched in basic and acidic residues. Positions 69 to 81 (GETTTVVTGTSEH) are enriched in low complexity. A helical membrane pass occupies residues 109–129 (VVIGGALALLSFLTPIAFMLL). The Extracellular portion of the chain corresponds to 130 to 147 (PQILWREDLEQCGTACEG). A helical transmembrane segment spans residues 148-168 (LFISVAFKLLILLLGSWALFF). Over 169 to 178 (RRPKAFFPRV) the chain is Cytoplasmic. A helical transmembrane segment spans residues 179–199 (FVFRALLMVLVFLLVVSYWLF). Residues 200–218 (YGVRILESRDKNYQGIVQY) lie on the Extracellular side of the membrane. A helical transmembrane segment spans residues 219 to 239 (AVSLVDALLFVHYLAVVLLEL). The Cytoplasmic segment spans residues 240–521 (RQLQPQFTIK…VMRLQSETSV (282 aa)). The PDZ-binding motif lies at 518–521 (ETSV).

The protein belongs to the Vang family. In terms of assembly, interacts with dvl/dsh. Interacts with prickle3. As to expression, during gastrulation, broadly expressed throughout the marginal zone and animal cap region. From the neurula stages, expression becomes concentrated in neural tissues, in the neural plate and neural tube.

The protein localises to the cell membrane. Its function is as follows. Has a role in non-canonical Wnt/planar cell polarity (PCP) signaling; can recruit dvl/dsh and prickle from the cytoplasm to the plasma membrane. Acts in a PCP complex to regulate the polarized assembly of fibronectrin on the surface of the mesoderm during gastrulation. Regulates convergent extension cell movements in both dorsal mesoderm and neural tissue during gastrulation, without affecting cell fate. Regulates neural fold closure during neurulation. May be required for cell surface localization of fzd3 and fzd6 in the inner ear. This chain is Vang-like protein 2-A (vangl2-a), found in Xenopus laevis (African clawed frog).